The chain runs to 698 residues: Elongation factor G (698 aa).

Residues 6 to 281 (ENIRNIGICA…AVVDYLPSPI (276 aa)) form the tr-type G domain. Residues 15–22 (AHIDAGKT), 79–83 (DTPGH), and 133–136 (NKMD) each bind GTP.

It belongs to the TRAFAC class translation factor GTPase superfamily. Classic translation factor GTPase family. EF-G/EF-2 subfamily.

The protein localises to the cytoplasm. Functionally, catalyzes the GTP-dependent ribosomal translocation step during translation elongation. During this step, the ribosome changes from the pre-translocational (PRE) to the post-translocational (POST) state as the newly formed A-site-bound peptidyl-tRNA and P-site-bound deacylated tRNA move to the P and E sites, respectively. Catalyzes the coordinated movement of the two tRNA molecules, the mRNA and conformational changes in the ribosome. This is Elongation factor G from Rickettsia bellii (strain RML369-C).